The chain runs to 556 residues: Oxygen-dependent choline dehydrogenase (556 aa).

6 to 35 (DYIIIGAGSAGNVLAARLTEDPGVSVLLLE) contributes to the FAD binding site. H475 acts as the Proton acceptor in catalysis.

Belongs to the GMC oxidoreductase family. It depends on FAD as a cofactor.

It carries out the reaction choline + A = betaine aldehyde + AH2. The catalysed reaction is betaine aldehyde + NAD(+) + H2O = glycine betaine + NADH + 2 H(+). It participates in amine and polyamine biosynthesis; betaine biosynthesis via choline pathway; betaine aldehyde from choline (cytochrome c reductase route): step 1/1. Functionally, involved in the biosynthesis of the osmoprotectant glycine betaine. Catalyzes the oxidation of choline to betaine aldehyde and betaine aldehyde to glycine betaine at the same rate. In Xanthomonas campestris pv. campestris (strain 8004), this protein is Oxygen-dependent choline dehydrogenase.